Reading from the N-terminus, the 465-residue chain is Purple acid phosphatase 2 (465 aa).

A signal peptide spans 1–32; it reads MGASRTGCYLLAVVLAAVMNAAIAGITSSFIR. N-linked (GlcNAc...) asparagine glycosylation is found at N110 and N138. Position 164 (D164) interacts with Fe cation. N-linked (GlcNAc...) asparagine glycosylation occurs at N172. D193 and Y196 together coordinate Fe cation. A Mn(2+)-binding site is contributed by D193. N230 provides a ligand contact to Mn(2+). N230 serves as a coordination point for substrate. A glycan (N-linked (GlcNAc...) asparagine) is linked at N303. Position 315 (H315) interacts with Mn(2+). H325 functions as the Proton donor in the catalytic mechanism. Residue H352 participates in Mn(2+) binding. 352–354 contributes to the substrate binding site; that stretch reads HVH. H354 contributes to the Fe cation binding site. 2 N-linked (GlcNAc...) asparagine glycosylation sites follow: N400 and N425.

Belongs to the metallophosphoesterase superfamily. Purple acid phosphatase family. Homodimer; disulfide-linked. Requires Fe cation as cofactor. The cofactor is Mn(2+). Zn(2+) serves as cofactor. It depends on Cu(2+) as a cofactor. Mg(2+) is required as a cofactor.

The protein localises to the secreted. It catalyses the reaction a phosphate monoester + H2O = an alcohol + phosphate. This chain is Purple acid phosphatase 2 (PAP2), found in Ipomoea batatas (Sweet potato).